The primary structure comprises 720 residues: TAL effector protein Rip19 (720 aa).

Disordered stretches follow at residues 13 to 85 (SVSL…PSLV) and 175 to 205 (QAFA…PTFL). Residues 67–85 (PRRPLPVAPASAPPAPSLV) are compositionally biased toward pro residues. The Nuclear localization signal 1 signature appears at 185–191 (RSARARR). The Cryptic repeat -1 repeat unit spans residues 286–320 (LTRAHIVDIARQRSGDLALQALLPVATALTAAPLR). Residues 321–354 (LSASQIATVAQYGERPAIQALYRLRRKLTRAPLH) form a Cryptic repeat 0 repeat. The Core repeat 1 repeat unit spans residues 355–389 (LTPQQVVAIASHDGGKPALEAVWAKLPVLRGVPYA). One copy of the Cryptic repeat +1 repeat lies at 390-423 (LSTAQVVAIACISGQQALEAIEAHMPTLRQAPHS). Residues 424–457 (LSPERVAAIACIGGRSAVEAVRQGLPVKAIRRIR) form a Cryptic repeat +2 repeat. Short sequence motifs (nuclear localization signal) lie at residues 455-458 (RIRR), 583-586 (HRKR), and 620-623 (RRKR). Residues 571–611 (SPGMAGQSACSPHRKRPAETAIAPRSIRRRPNNAGQPSEPW) are disordered.

This sequence belongs to the transcription activator-like effector (TALE) family. RipTAL/RTL subfamily.

Its subcellular location is the secreted. The protein localises to the host nucleus. In terms of biological role, does not activate plant gene transcription, because it has too few core repeats. The polypeptide is TAL effector protein Rip19 (Ralstonia solanacearum (Pseudomonas solanacearum)).